Here is a 378-residue protein sequence, read N- to C-terminus: MKVLAAMSGGVDSAVAAARAVDAGHDVVGVHLALSRMPGTLRTGSRGCCTIEDASDAWRACERLGIPFYTWDFSERFAEDVVDDFVAEYEAGRTPNPCMRCNERIKFAALLERALELGFDAVCTGHYAAVRPGPDGSLELHRAADDAKDQSYVLGVLTADQLAHCLFPLADTPSKELVRAEAAERGLSVAAKPDSHDICFIPDGDTRGWLAERIDLAPGPIVDPEGQELGTHAGAQAFTVGQRKGLAIGRPAPDGKPRFVLEVRPKENKVVVGGRELLDVDRITGIRPSWAGAPVPEARTGAWFDCALQFRAHGEIVEARARQRADAAGHPGWEIEPARPLRGVAPGQTAVLYRGTRVLGQATIDTARNARLSAPADA.

ATP contacts are provided by residues Ala6 to Ser13 and Leu32. Cys101 (nucleophile) is an active-site residue. Residues Cys101 and Cys199 are joined by a disulfide bond. Gly125 serves as a coordination point for ATP. The interval Lys148–Gln150 is interaction with tRNA. Catalysis depends on Cys199, which acts as the Cysteine persulfide intermediate.

The protein belongs to the MnmA/TRMU family.

Its subcellular location is the cytoplasm. It catalyses the reaction S-sulfanyl-L-cysteinyl-[protein] + uridine(34) in tRNA + AH2 + ATP = 2-thiouridine(34) in tRNA + L-cysteinyl-[protein] + A + AMP + diphosphate + H(+). Its function is as follows. Catalyzes the 2-thiolation of uridine at the wobble position (U34) of tRNA, leading to the formation of s(2)U34. The polypeptide is tRNA-specific 2-thiouridylase MnmA (Micrococcus luteus (strain ATCC 4698 / DSM 20030 / JCM 1464 / CCM 169 / CCUG 5858 / IAM 1056 / NBRC 3333 / NCIMB 9278 / NCTC 2665 / VKM Ac-2230) (Micrococcus lysodeikticus)).